Reading from the N-terminus, the 246-residue chain is Proteasome subunit alpha (246 aa).

This sequence belongs to the peptidase T1A family. In terms of assembly, the 20S proteasome core is composed of 14 alpha and 14 beta subunits that assemble into four stacked heptameric rings, resulting in a barrel-shaped structure. The two inner rings, each composed of seven catalytic beta subunits, are sandwiched by two outer rings, each composed of seven alpha subunits. The catalytic chamber with the active sites is on the inside of the barrel. Has probably a gated structure, the ends of the cylinder being occluded by the N-termini of the alpha-subunits. Is likely capped at one or both ends by the proteasome regulatory ATPase, PAN.

It localises to the cytoplasm. With respect to regulation, the formation of the proteasomal ATPase PAN-20S proteasome complex, via the docking of the C-termini of PAN into the intersubunit pockets in the alpha-rings, triggers opening of the gate for substrate entry. Interconversion between the open-gate and close-gate conformations leads to a dynamic regulation of the 20S proteasome proteolysis activity. Component of the proteasome core, a large protease complex with broad specificity involved in protein degradation. In Archaeoglobus fulgidus (strain ATCC 49558 / DSM 4304 / JCM 9628 / NBRC 100126 / VC-16), this protein is Proteasome subunit alpha.